A 226-amino-acid chain; its full sequence is V-type proton ATPase subunit E (226 aa).

This sequence belongs to the V-ATPase E subunit family. As to quaternary structure, V-ATPase is a heteromultimeric enzyme composed of a peripheral catalytic V1 complex (components A to H) attached to an integral membrane V0 proton pore complex (components: a, c, c', c'', d, e, f and VOA1).

It localises to the vacuole membrane. In terms of biological role, subunit of the V1 complex of vacuolar(H+)-ATPase (V-ATPase), a multisubunit enzyme composed of a peripheral complex (V1) that hydrolyzes ATP and a membrane integral complex (V0) that translocates protons. V-ATPase is responsible for acidifying and maintaining the pH of intracellular compartments. The protein is V-type proton ATPase subunit E (VMA4) of Candida albicans (Yeast).